The chain runs to 321 residues: MLNNEYKNSSLKIFSLKGNEPLAQEVADRVGIELGKCSVKRFSDGEIQINIEESIRGCDVFIIQPTSNPVNLHLMELLIMIDACKRASAANINIVVPYYGYARQDRKARSREPITAKLVANLIETAGANRMIALDLHAPQIQGFFDIPIDHLMGVPIIGQHFENDPNIDPEECVVVSPDHGGVTRARKLADILKTPIAIIDKRRPKPNVAEVMNIVGEIEGRTAIIIDDIIDTAGTITLAAQALKDKGAKDVYACCTHPVLSGPAKERIENSAIKELIVTNSILLDDTRKPSNTKELSVAGLLAQAIIRVYERESVSVLFD.

ATP is bound by residues 44-46 (DGE) and 103-104 (RQ). His-137 and Asp-179 together coordinate Mg(2+). Lys-202 is a catalytic residue. D-ribose 5-phosphate is bound by residues Arg-204, Asp-228, and 232-236 (DTAGT).

This sequence belongs to the ribose-phosphate pyrophosphokinase family. Class I subfamily. Homohexamer. Mg(2+) is required as a cofactor.

The protein resides in the cytoplasm. It catalyses the reaction D-ribose 5-phosphate + ATP = 5-phospho-alpha-D-ribose 1-diphosphate + AMP + H(+). It functions in the pathway metabolic intermediate biosynthesis; 5-phospho-alpha-D-ribose 1-diphosphate biosynthesis; 5-phospho-alpha-D-ribose 1-diphosphate from D-ribose 5-phosphate (route I): step 1/1. Its function is as follows. Involved in the biosynthesis of the central metabolite phospho-alpha-D-ribosyl-1-pyrophosphate (PRPP) via the transfer of pyrophosphoryl group from ATP to 1-hydroxyl of ribose-5-phosphate (Rib-5-P). In Staphylococcus haemolyticus (strain JCSC1435), this protein is Ribose-phosphate pyrophosphokinase.